A 180-amino-acid chain; its full sequence is Large ribosomal subunit protein uL5 (180 aa).

Belongs to the universal ribosomal protein uL5 family. In terms of assembly, part of the 50S ribosomal subunit; part of the 5S rRNA/L5/L18/L25 subcomplex. Contacts the 5S rRNA and the P site tRNA. Forms a bridge to the 30S subunit in the 70S ribosome.

Its function is as follows. This is one of the proteins that bind and probably mediate the attachment of the 5S RNA into the large ribosomal subunit, where it forms part of the central protuberance. In the 70S ribosome it contacts protein S13 of the 30S subunit (bridge B1b), connecting the 2 subunits; this bridge is implicated in subunit movement. Contacts the P site tRNA; the 5S rRNA and some of its associated proteins might help stabilize positioning of ribosome-bound tRNAs. The protein is Large ribosomal subunit protein uL5 of Xanthomonas oryzae pv. oryzae (strain MAFF 311018).